A 256-amino-acid polypeptide reads, in one-letter code: Hydroxyacylglutathione hydrolase (256 aa).

Positions 57, 59, 61, 62, 115, 134, and 172 each coordinate Zn(2+).

It belongs to the metallo-beta-lactamase superfamily. Glyoxalase II family. As to quaternary structure, monomer. Zn(2+) is required as a cofactor.

It catalyses the reaction an S-(2-hydroxyacyl)glutathione + H2O = a 2-hydroxy carboxylate + glutathione + H(+). Its pathway is secondary metabolite metabolism; methylglyoxal degradation; (R)-lactate from methylglyoxal: step 2/2. Thiolesterase that catalyzes the hydrolysis of S-D-lactoyl-glutathione to form glutathione and D-lactic acid. The polypeptide is Hydroxyacylglutathione hydrolase (Rhizobium etli (strain ATCC 51251 / DSM 11541 / JCM 21823 / NBRC 15573 / CFN 42)).